Consider the following 127-residue polypeptide: Fluoride-specific ion channel FluC (127 aa).

Helical transmembrane passes span 1 to 21 (MPQGLALYCFIAAGGATGACL), 39 to 59 (FGTLTVNVVGSFALALLYGVI), 72 to 92 (LIGVGLLGAFTTFSTFSVETL), and 105 to 125 (ANVFLNVGACLLAGWLAIELM). 2 residues coordinate Na(+): Gly79 and Thr82.

It belongs to the fluoride channel Fluc/FEX (TC 1.A.43) family.

The protein resides in the cell inner membrane. It catalyses the reaction fluoride(in) = fluoride(out). With respect to regulation, na(+) is not transported, but it plays an essential structural role and its presence is essential for fluoride channel function. Functionally, fluoride-specific ion channel. Important for reducing fluoride concentration in the cell, thus reducing its toxicity. This Alteromonas mediterranea (strain DSM 17117 / CIP 110805 / LMG 28347 / Deep ecotype) protein is Fluoride-specific ion channel FluC.